Reading from the N-terminus, the 160-residue chain is Cyclic pyranopterin monophosphate synthase (160 aa).

Substrate contacts are provided by residues 76 to 78 (LCH) and 114 to 115 (ME). D129 is an active-site residue.

Belongs to the MoaC family. As to quaternary structure, homohexamer; trimer of dimers.

It carries out the reaction (8S)-3',8-cyclo-7,8-dihydroguanosine 5'-triphosphate = cyclic pyranopterin phosphate + diphosphate. The protein operates within cofactor biosynthesis; molybdopterin biosynthesis. Functionally, catalyzes the conversion of (8S)-3',8-cyclo-7,8-dihydroguanosine 5'-triphosphate to cyclic pyranopterin monophosphate (cPMP). The protein is Cyclic pyranopterin monophosphate synthase of Vibrio cholerae serotype O1 (strain ATCC 39541 / Classical Ogawa 395 / O395).